Here is a 169-residue protein sequence, read N- to C-terminus: S-ribosylhomocysteine lyase (169 aa).

Positions 54, 58, and 129 each coordinate Fe cation.

It belongs to the LuxS family. As to quaternary structure, homodimer. It depends on Fe cation as a cofactor.

It carries out the reaction S-(5-deoxy-D-ribos-5-yl)-L-homocysteine = (S)-4,5-dihydroxypentane-2,3-dione + L-homocysteine. Involved in the synthesis of autoinducer 2 (AI-2) which is secreted by bacteria and is used to communicate both the cell density and the metabolic potential of the environment. The regulation of gene expression in response to changes in cell density is called quorum sensing. Catalyzes the transformation of S-ribosylhomocysteine (RHC) to homocysteine (HC) and 4,5-dihydroxy-2,3-pentadione (DPD). The polypeptide is S-ribosylhomocysteine lyase (Actinobacillus pleuropneumoniae serotype 5b (strain L20)).